A 415-amino-acid chain; its full sequence is Squalene synthase 1 (415 aa).

2 helical membrane-spanning segments follow: residues 281–301 (AIFRFCAIPQIMAIGTLALCF) and 391–411 (LIAIIFIILAILYAYLSSNLL).

This sequence belongs to the phytoene/squalene synthase family. Mg(2+) is required as a cofactor. The cofactor is Mn(2+). Mostly expressed in the shoot apex (buds) and roots, and, to a lower extent, in stems, leaves, flowers and seeds.

The protein resides in the endoplasmic reticulum membrane. It catalyses the reaction 2 (2E,6E)-farnesyl diphosphate + NADH + H(+) = squalene + 2 diphosphate + NAD(+). It carries out the reaction 2 (2E,6E)-farnesyl diphosphate + NADPH + H(+) = squalene + 2 diphosphate + NADP(+). Its pathway is terpene metabolism; lanosterol biosynthesis; lanosterol from farnesyl diphosphate: step 1/3. Functionally, component of the triterpene saponins (e.g. ginsenosides or panaxosides) and phytosterols biosynthetic pathways. Catalyzes the biosynthesis of squalene. The sequence is that of Squalene synthase 1 from Panax ginseng (Korean ginseng).